The sequence spans 279 residues: Inorganic pyrophosphatase (279 aa).

Position 100 (arginine 100) interacts with diphosphate. Mg(2+) is bound by residues aspartate 132, aspartate 137, and aspartate 169.

It belongs to the PPase family. It depends on Mg(2+) as a cofactor.

The enzyme catalyses diphosphate + H2O = 2 phosphate + H(+). The chain is Inorganic pyrophosphatase (ppa1) from Dictyostelium discoideum (Social amoeba).